A 75-amino-acid chain; its full sequence is Protein Tlp homolog (75 aa).

Residues 48–75 (KNQRRREALDGMREEIKDEARDKKNGYM) form a disordered region.

Belongs to the Tlp family.

The protein is Protein Tlp homolog of Clostridium botulinum (strain 657 / Type Ba4).